A 429-amino-acid polypeptide reads, in one-letter code: UDP-N-acetylglucosamine 1-carboxyvinyltransferase (429 aa).

22–23 (KN) is a phosphoenolpyruvate binding site. R102 is a binding site for UDP-N-acetyl-alpha-D-glucosamine. The active-site Proton donor is C126. C126 is modified (2-(S-cysteinyl)pyruvic acid O-phosphothioketal). Residues 131–135 (RPVDL), D316, and I338 each bind UDP-N-acetyl-alpha-D-glucosamine.

The protein belongs to the EPSP synthase family. MurA subfamily.

It is found in the cytoplasm. The catalysed reaction is phosphoenolpyruvate + UDP-N-acetyl-alpha-D-glucosamine = UDP-N-acetyl-3-O-(1-carboxyvinyl)-alpha-D-glucosamine + phosphate. The protein operates within cell wall biogenesis; peptidoglycan biosynthesis. In terms of biological role, cell wall formation. Adds enolpyruvyl to UDP-N-acetylglucosamine. This is UDP-N-acetylglucosamine 1-carboxyvinyltransferase from Methylorubrum populi (strain ATCC BAA-705 / NCIMB 13946 / BJ001) (Methylobacterium populi).